A 44-amino-acid polypeptide reads, in one-letter code: Mu-conotoxin-like Cal 12.1.2h (44 aa).

Intrachain disulfides connect C3–C16, C11–C28, C18–C33, and C27–C38. At W17 the chain carries 6'-bromotryptophan. Position 23 is a 4-hydroxyproline (P23). 6'-bromotryptophan is present on residues W36 and W37. P39 carries the post-translational modification 4-hydroxyproline. W43 carries the post-translational modification 6'-bromotryptophan.

Expressed by the venom duct.

It localises to the secreted. Functionally, mu-conotoxins block voltage-gated sodium channels. This toxin reversibly blocks voltage-gated sodium channel in cephalopods, with no alteration in the voltage dependence of sodium conductance or on the kinetics of inactivation. The sequence is that of Mu-conotoxin-like Cal 12.1.2h from Californiconus californicus (California cone).